A 110-amino-acid chain; its full sequence is Large ribosomal subunit protein uL22 (110 aa).

It belongs to the universal ribosomal protein uL22 family. Part of the 50S ribosomal subunit.

This protein binds specifically to 23S rRNA; its binding is stimulated by other ribosomal proteins, e.g. L4, L17, and L20. It is important during the early stages of 50S assembly. It makes multiple contacts with different domains of the 23S rRNA in the assembled 50S subunit and ribosome. In terms of biological role, the globular domain of the protein is located near the polypeptide exit tunnel on the outside of the subunit, while an extended beta-hairpin is found that lines the wall of the exit tunnel in the center of the 70S ribosome. In Haemophilus ducreyi (strain 35000HP / ATCC 700724), this protein is Large ribosomal subunit protein uL22.